Reading from the N-terminus, the 540-residue chain is NADH-ubiquinone oxidoreductase chain 4 (540 aa).

The next 14 helical transmembrane spans lie at 2–22 (TIIAISIMNVVIGIAILGVIL), 35–55 (IFILGVQGILIVLSGIMLIGC), 89–109 (ISAIFIFLTIILILSCNLISI), 118–138 (QKFQIMLLLTEILIINFFAAT), 140–160 (LVQLYIVYEATLIPMVIMIGV), 172–192 (FQILIYTLIGSIFMLMSIGIL), 218–238 (LIFIGFFIGFAVKIPIAPLHL), 248–268 (PTAGSVLLAGILLKLGGYGYI), 282–302 (YFPIIGGICLISILYTGIATL), 310–330 (IVAYSSISHMNVIVLGLFSGV), 338–358 (IILMIGHGVVSGGLFLCIGVI), 376–396 (VMPIMAILFFLLVLGNIAFPI), 415–435 (IIIAFFSALSMIVTAIYSFWL), and 501–521 (VNIFEFTSISLMVIMMIIIGM).

The protein belongs to the complex I subunit 4 family.

It is found in the mitochondrion membrane. It carries out the reaction a ubiquinone + NADH + 5 H(+)(in) = a ubiquinol + NAD(+) + 4 H(+)(out). In terms of biological role, core subunit of the mitochondrial membrane respiratory chain NADH dehydrogenase (Complex I) that is believed to belong to the minimal assembly required for catalysis. Complex I functions in the transfer of electrons from NADH to the respiratory chain. The immediate electron acceptor for the enzyme is believed to be ubiquinone. The protein is NADH-ubiquinone oxidoreductase chain 4 (nad4) of Dictyostelium discoideum (Social amoeba).